We begin with the raw amino-acid sequence, 348 residues long: Glucan endo-1,3-beta-glucosidase, basic isoform (348 aa).

Gln1 is subject to Pyrrolidone carboxylic acid. Glu95 acts as the Proton donor in catalysis. The active-site Nucleophile is the Glu240. A propeptide spans 317–348 (AQRMQRLLLMSSMQHIPLRVTCKLEPSSQSLL) (removed in mature form).

It belongs to the glycosyl hydrolase 17 family.

It is found in the vacuole. It carries out the reaction Hydrolysis of (1-&gt;3)-beta-D-glucosidic linkages in (1-&gt;3)-beta-D-glucans.. In terms of biological role, implicated in the defense of plants against pathogens. In Phaseolus vulgaris (Kidney bean), this protein is Glucan endo-1,3-beta-glucosidase, basic isoform.